The chain runs to 199 residues: 3-isopropylmalate dehydratase small subunit (199 aa).

The protein belongs to the LeuD family. LeuD type 1 subfamily. Heterodimer of LeuC and LeuD.

The enzyme catalyses (2R,3S)-3-isopropylmalate = (2S)-2-isopropylmalate. Its pathway is amino-acid biosynthesis; L-leucine biosynthesis; L-leucine from 3-methyl-2-oxobutanoate: step 2/4. In terms of biological role, catalyzes the isomerization between 2-isopropylmalate and 3-isopropylmalate, via the formation of 2-isopropylmaleate. The sequence is that of 3-isopropylmalate dehydratase small subunit from Aeromonas hydrophila subsp. hydrophila (strain ATCC 7966 / DSM 30187 / BCRC 13018 / CCUG 14551 / JCM 1027 / KCTC 2358 / NCIMB 9240 / NCTC 8049).